Here is a 485-residue protein sequence, read N- to C-terminus: Probable cytosol aminopeptidase (485 aa).

Lys251 and Asp256 together coordinate Mn(2+). The active site involves Lys263. Positions 274, 333, and 335 each coordinate Mn(2+). The active site involves Arg337.

This sequence belongs to the peptidase M17 family. Requires Mn(2+) as cofactor.

The protein resides in the cytoplasm. It carries out the reaction Release of an N-terminal amino acid, Xaa-|-Yaa-, in which Xaa is preferably Leu, but may be other amino acids including Pro although not Arg or Lys, and Yaa may be Pro. Amino acid amides and methyl esters are also readily hydrolyzed, but rates on arylamides are exceedingly low.. The catalysed reaction is Release of an N-terminal amino acid, preferentially leucine, but not glutamic or aspartic acids.. In terms of biological role, presumably involved in the processing and regular turnover of intracellular proteins. Catalyzes the removal of unsubstituted N-terminal amino acids from various peptides. The polypeptide is Probable cytosol aminopeptidase (Brucella melitensis biotype 1 (strain ATCC 23456 / CCUG 17765 / NCTC 10094 / 16M)).